A 518-amino-acid chain; its full sequence is Putative beta-xylosidase (518 aa).

Residue aspartate 47 is the Proton acceptor of the active site. Glutamate 203 functions as the Proton donor in the catalytic mechanism.

Belongs to the glycosyl hydrolase 43 family.

It carries out the reaction Hydrolysis of (1-&gt;4)-beta-D-xylans, to remove successive D-xylose residues from the non-reducing termini.. In Xylanibacter ruminicola (Prevotella ruminicola), this protein is Putative beta-xylosidase.